The sequence spans 741 residues: mRNA decapping complex subunit 2 (741 aa).

The tract at residues 1 to 243 is interaction with pdc1; sequence MSFTNATFSQ…KKRNIANNTT (243 aa). The Nudix hydrolase domain occupies 94–227; sequence TRIPVRGAIM…KFYMVIPFLA (134 aa). The Nudix box motif lies at 128-149; sequence GKIDKDESDVDCAIREVYEETG. 2 residues coordinate ATP: arginine 167 and tyrosine 220. Polar residues-rich tracts occupy residues 268–278 and 439–453; these read TAPSDLATPQP and YGSSSPYVNGHQTQQ. Disordered stretches follow at residues 268–289, 425–453, 525–552, 592–616, and 654–721; these read TAPSDLATPQPSTFPQPPVESH, SVSSYGLGKTPQPAYGSSSPYVNGHQTQQ, TKKFSDNSQGEEISDNLHGESCNNPNAN, GLPTPANDLQNKSQNNERKASSQVK, and VSPQ…FKGS. Composition is skewed to basic and acidic residues over residues 606 to 616, 681 to 690, and 707 to 721; these read NNERKASSQVK, ENSETNKNHV, and DQKKEDTQESDFKGS.

It belongs to the Nudix hydrolase family. DCP2 subfamily. As to quaternary structure, component of the decapping complex composed of dcp1 and dcp2. Interacts with edc3. Interacts with pdc1; via N-terminus. Interacts with pdc2. It depends on Mn(2+) as a cofactor.

It is found in the cytoplasm. Its subcellular location is the P-body. In terms of biological role, catalytic component of the decapping complex necessary for the degradation of mRNAs, both in normal mRNA turnover and in nonsense-mediated mRNA decay. Removes the 7-methyl guanine cap structure from mRNA molecules, yielding a 5'-phosphorylated mRNA fragment and 7m-GDP. Decapping is the major pathway of mRNA degradation in yeast. It occurs through deadenylation, decapping and subsequent 5' to 3' exonucleolytic decay of the transcript body. The sequence is that of mRNA decapping complex subunit 2 (dcp2) from Schizosaccharomyces pombe (strain 972 / ATCC 24843) (Fission yeast).